A 950-amino-acid chain; its full sequence is Bifunctional glutamine synthetase adenylyltransferase/adenylyl-removing enzyme (950 aa).

Residues 1-443 (MSLPSPLIPV…VFVTLIGDEE (443 aa)) form an adenylyl removase region. An adenylyl transferase region spans residues 450-950 (ERHFNELWDM…WQEWLESSTI (501 aa)).

The protein belongs to the GlnE family. Mg(2+) serves as cofactor.

It catalyses the reaction [glutamine synthetase]-O(4)-(5'-adenylyl)-L-tyrosine + phosphate = [glutamine synthetase]-L-tyrosine + ADP. It carries out the reaction [glutamine synthetase]-L-tyrosine + ATP = [glutamine synthetase]-O(4)-(5'-adenylyl)-L-tyrosine + diphosphate. Involved in the regulation of glutamine synthetase GlnA, a key enzyme in the process to assimilate ammonia. When cellular nitrogen levels are high, the C-terminal adenylyl transferase (AT) inactivates GlnA by covalent transfer of an adenylyl group from ATP to specific tyrosine residue of GlnA, thus reducing its activity. Conversely, when nitrogen levels are low, the N-terminal adenylyl removase (AR) activates GlnA by removing the adenylyl group by phosphorolysis, increasing its activity. The regulatory region of GlnE binds the signal transduction protein PII (GlnB) which indicates the nitrogen status of the cell. The protein is Bifunctional glutamine synthetase adenylyltransferase/adenylyl-removing enzyme of Vibrio vulnificus (strain CMCP6).